A 106-amino-acid chain; its full sequence is Ferredoxin-2 (106 aa).

4Fe-4S ferredoxin-type domains are found at residues 2–29 and 30–59; these read YVVTENCIKCKYQDCVEVCPVDCFYEGE and NFLVINPDECIDCGVCNPECPAEAIAGKWL. Residues Cys8 and Cys16 each contribute to the [3Fe-4S] cluster site. 4 residues coordinate [4Fe-4S] cluster: Cys20, Cys39, Cys42, and Cys45. Cys49 is a [3Fe-4S] cluster binding site. The tract at residues 80 to 106 is disordered; the sequence is ADADDWKDKPDKTGLLSENPGKGTVCH.

[4Fe-4S] cluster is required as a cofactor. The cofactor is [3Fe-4S] cluster.

Its function is as follows. Ferredoxins are iron-sulfur proteins that transfer electrons in a wide variety of metabolic reactions. The chain is Ferredoxin-2 from Rhodospirillum rubrum.